Consider the following 334-residue polypeptide: Protein U17/U16 (334 aa).

The protein belongs to the herpesviridae US22 family. Post-translationally, isoform 1 is not glycosylated.

Its function is as follows. Isoform 3 can transactivate the human immunodeficiency virus type 1 promoter. The sequence is that of Protein U17/U16 (U17/U16) from Homo sapiens (Human).